The sequence spans 476 residues: MKVGITASKSDDFSEWYTQVVLKAELADYAPVKGLIVLRPDGYSIWESIRTSLDVKLAARGVRNGFLPVLIPESLLGKEKEHFAGFNPEVFWVTHSGENKVGDRLALRPTSETLAYSLYSKWIKSWRDLPLRINFWNTALRAEIKSTKPFLRTSEFLWQEGHTVHACSEEAESEVAAILELYRETVEGDLAIPVITGRKSEKEKFVGAVYTTTMESMMPDGRALQMGTSHFLGQNFSRPFEVKFADKDNVEHFAWQTSWGLSWRLIGAMIMVHGDDKGLVLPPKVAPLQVVIIPISYSGEEGAQVLAAAEGMEAELLKAGIRARTDKREELTPGFKFHDWEMRGVPVRIEIGPRDLKDGSAVLATRHDGKKSKVPLDGAAVNIEEELCRVQTEMLGAAKRALDGMIHDASSYGALTKAVEGGGFVRAAWCGGLECEEKVKEETGADIRVVPEGGAEGACIVCGGRAASIPLFARGY.

It belongs to the class-II aminoacyl-tRNA synthetase family. ProS type 3 subfamily. As to quaternary structure, homodimer.

The protein resides in the cytoplasm. It catalyses the reaction tRNA(Pro) + L-proline + ATP = L-prolyl-tRNA(Pro) + AMP + diphosphate. Catalyzes the attachment of proline to tRNA(Pro) in a two-step reaction: proline is first activated by ATP to form Pro-AMP and then transferred to the acceptor end of tRNA(Pro). In Cenarchaeum symbiosum (strain A), this protein is Proline--tRNA ligase.